A 445-amino-acid chain; its full sequence is Phosphoglucosamine mutase (445 aa).

The active-site Phosphoserine intermediate is S102. Residues S102, D241, D243, and D245 each contribute to the Mg(2+) site. Phosphoserine is present on S102.

Belongs to the phosphohexose mutase family. Mg(2+) is required as a cofactor. In terms of processing, activated by phosphorylation.

It carries out the reaction alpha-D-glucosamine 1-phosphate = D-glucosamine 6-phosphate. Its function is as follows. Catalyzes the conversion of glucosamine-6-phosphate to glucosamine-1-phosphate. The chain is Phosphoglucosamine mutase from Shewanella pealeana (strain ATCC 700345 / ANG-SQ1).